The chain runs to 341 residues: Anthranilate phosphoribosyltransferase (341 aa).

Residues Gly-84, Gly-87–Asp-88, Thr-92, Asn-94–Thr-97, Lys-112–Ser-120, and Ser-124 contribute to the 5-phospho-alpha-D-ribose 1-diphosphate site. An anthranilate-binding site is contributed by Gly-84. Ser-96 is a binding site for Mg(2+). Asn-115 serves as a coordination point for anthranilate. Anthranilate is bound at residue Arg-170. Mg(2+) is bound by residues Asp-229 and Glu-230.

It belongs to the anthranilate phosphoribosyltransferase family. In terms of assembly, homodimer. It depends on Mg(2+) as a cofactor.

The catalysed reaction is N-(5-phospho-beta-D-ribosyl)anthranilate + diphosphate = 5-phospho-alpha-D-ribose 1-diphosphate + anthranilate. The protein operates within amino-acid biosynthesis; L-tryptophan biosynthesis; L-tryptophan from chorismate: step 2/5. In terms of biological role, catalyzes the transfer of the phosphoribosyl group of 5-phosphorylribose-1-pyrophosphate (PRPP) to anthranilate to yield N-(5'-phosphoribosyl)-anthranilate (PRA). This Polynucleobacter necessarius subsp. necessarius (strain STIR1) protein is Anthranilate phosphoribosyltransferase.